A 409-amino-acid polypeptide reads, in one-letter code: Arginine deiminase (409 aa).

Cys-397 acts as the Amidino-cysteine intermediate in catalysis.

The protein belongs to the arginine deiminase family.

The protein resides in the cytoplasm. The catalysed reaction is L-arginine + H2O = L-citrulline + NH4(+). It functions in the pathway amino-acid degradation; L-arginine degradation via ADI pathway; carbamoyl phosphate from L-arginine: step 1/2. This Metamycoplasma hominis (Mycoplasma hominis) protein is Arginine deiminase (arcA).